A 205-amino-acid chain; its full sequence is Small ribosomal subunit protein uS4 (205 aa).

The tract at residues 20–46 is disordered; the sequence is WGRSKSPVNRREYGPGQHGQRRKGKLS. In terms of domain architecture, S4 RNA-binding spans 94 to 157; that stretch reads RRLDAVVYRA…RQLTLVLEAS (64 aa).

It belongs to the universal ribosomal protein uS4 family. In terms of assembly, part of the 30S ribosomal subunit. Contacts protein S5. The interaction surface between S4 and S5 is involved in control of translational fidelity.

One of the primary rRNA binding proteins, it binds directly to 16S rRNA where it nucleates assembly of the body of the 30S subunit. Its function is as follows. With S5 and S12 plays an important role in translational accuracy. The polypeptide is Small ribosomal subunit protein uS4 (Beijerinckia indica subsp. indica (strain ATCC 9039 / DSM 1715 / NCIMB 8712)).